We begin with the raw amino-acid sequence, 242 residues long: Segregation and condensation protein A (242 aa).

This sequence belongs to the ScpA family. As to quaternary structure, component of a cohesin-like complex composed of ScpA, ScpB and the Smc homodimer, in which ScpA and ScpB bind to the head domain of Smc. The presence of the three proteins is required for the association of the complex with DNA.

The protein resides in the cytoplasm. Its function is as follows. Participates in chromosomal partition during cell division. May act via the formation of a condensin-like complex containing Smc and ScpB that pull DNA away from mid-cell into both cell halves. The sequence is that of Segregation and condensation protein A from Lactococcus lactis subsp. lactis (strain IL1403) (Streptococcus lactis).